The following is a 183-amino-acid chain: ATP-dependent protease subunit HslV (183 aa).

T13 is a catalytic residue. Residues G168, C171, and T174 each contribute to the Na(+) site.

Belongs to the peptidase T1B family. HslV subfamily. In terms of assembly, a double ring-shaped homohexamer of HslV is capped on each side by a ring-shaped HslU homohexamer. The assembly of the HslU/HslV complex is dependent on binding of ATP.

The protein resides in the cytoplasm. The enzyme catalyses ATP-dependent cleavage of peptide bonds with broad specificity.. Allosterically activated by HslU binding. Protease subunit of a proteasome-like degradation complex believed to be a general protein degrading machinery. The protein is ATP-dependent protease subunit HslV of Xanthomonas axonopodis pv. citri (strain 306).